A 93-amino-acid polypeptide reads, in one-letter code: ATP-dependent Clp protease adapter protein ClpS (93 aa).

It belongs to the ClpS family. Binds to the N-terminal domain of the chaperone ClpA.

Involved in the modulation of the specificity of the ClpAP-mediated ATP-dependent protein degradation. This Gloeobacter violaceus (strain ATCC 29082 / PCC 7421) protein is ATP-dependent Clp protease adapter protein ClpS.